Reading from the N-terminus, the 92-residue chain is Cell division topological specificity factor (92 aa).

It belongs to the MinE family.

Functionally, prevents the cell division inhibition by proteins MinC and MinD at internal division sites while permitting inhibition at polar sites. This ensures cell division at the proper site by restricting the formation of a division septum at the midpoint of the long axis of the cell. This is Cell division topological specificity factor from Desulforamulus reducens (strain ATCC BAA-1160 / DSM 100696 / MI-1) (Desulfotomaculum reducens).